Reading from the N-terminus, the 80-residue chain is Gamma-conotoxin-like Am6.6 (80 aa).

The N-terminal stretch at 1–19 is a signal peptide; sequence MEKLTILLLVAAILMSTQA. Residues 20–45 constitute a propeptide that is removed on maturation; the sequence is LNQEQRQQAKINLLSKKKPSAERWRR. 3 disulfide bridges follow: C47/C61, C54/C65, and C60/C70. E56 and E59 each carry 4-carboxyglutamate. At E71 the chain carries 4-carboxyglutamate. P76 is subject to 4-hydroxyproline. Residues 78-80 constitute a propeptide that is removed on maturation; sequence RAI.

It belongs to the conotoxin O2 family. As to expression, expressed by the venom duct.

It is found in the secreted. Its function is as follows. Gamma-conotoxins may act on voltage-gated non-specific cation pacemaker channels (HCN). The polypeptide is Gamma-conotoxin-like Am6.6 (Conus amadis (Amadis cone)).